The primary structure comprises 399 residues: Lipoyl synthase, mitochondrial (399 aa).

Residues 1–14 (MALISRSCGAASRY) constitute a mitochondrion transit peptide. Positions 39–52 (AASTSSSSSPSPST) are enriched in low complexity. The disordered stretch occupies residues 39-60 (AASTSSSSSPSPSTHNDRKKDL). Cysteine 128, cysteine 133, cysteine 139, cysteine 159, cysteine 163, cysteine 166, and serine 374 together coordinate [4Fe-4S] cluster. Positions 144-363 (EYATATATIM…EKVGQEMGFI (220 aa)) constitute a Radical SAM core domain.

This sequence belongs to the radical SAM superfamily. Lipoyl synthase family. Requires [4Fe-4S] cluster as cofactor.

It localises to the mitochondrion. The catalysed reaction is [[Fe-S] cluster scaffold protein carrying a second [4Fe-4S](2+) cluster] + N(6)-octanoyl-L-lysyl-[protein] + 2 oxidized [2Fe-2S]-[ferredoxin] + 2 S-adenosyl-L-methionine + 4 H(+) = [[Fe-S] cluster scaffold protein] + N(6)-[(R)-dihydrolipoyl]-L-lysyl-[protein] + 4 Fe(3+) + 2 hydrogen sulfide + 2 5'-deoxyadenosine + 2 L-methionine + 2 reduced [2Fe-2S]-[ferredoxin]. Its pathway is protein modification; protein lipoylation via endogenous pathway; protein N(6)-(lipoyl)lysine from octanoyl-[acyl-carrier-protein]: step 2/2. Its function is as follows. Catalyzes the radical-mediated insertion of two sulfur atoms into the C-6 and C-8 positions of the octanoyl moiety bound to the lipoyl domains of lipoate-dependent enzymes, thereby converting the octanoylated domains into lipoylated derivatives. This is Lipoyl synthase, mitochondrial (lias) from Danio rerio (Zebrafish).